A 487-amino-acid polypeptide reads, in one-letter code: Zinc finger and BTB domain-containing protein 32 (487 aa).

One can recognise a BTB domain in the interval C29–P87. A compositionally biased stretch (basic and acidic residues) spans A112–H166. 2 disordered regions span residues A112 to T244 and Q308 to R371. Over residues Q308–S320 the composition is skewed to polar residues. The segment covering P357 to R369 has biased composition (pro residues). 3 C2H2-type zinc fingers span residues Y373–H395, F401–H423, and Y428–H450. The tract at residues S468–T487 is disordered.

It belongs to the krueppel C2H2-type zinc-finger protein family. As to quaternary structure, homodimer (via PTB domain). Interacts with the N-terminal of FANCC. Interacts with ZBTB16. Interacts with GATA3. Predominantly expressed in testis. Some isoforms are ubiquitously expressed.

The protein localises to the nucleus. Functionally, DNA-binding protein that binds to the to a 5'-TGTACAGTGT-3' core sequence. May function as a transcriptional transactivator and transcriptional repressor. Probably exerts its repressor effect by preventing GATA3 from binding to DNA. May play a role in regulating the differentiation and activation of helper T-cells. This is Zinc finger and BTB domain-containing protein 32 (ZBTB32) from Homo sapiens (Human).